The sequence spans 870 residues: Leucine--tRNA ligase (870 aa).

Positions 42–52 (PYPSGKLHMGH) match the 'HIGH' region motif. The 'KMSKS' region motif lies at 629–633 (KMSKS). Lys632 is a binding site for ATP.

This sequence belongs to the class-I aminoacyl-tRNA synthetase family.

The protein localises to the cytoplasm. It catalyses the reaction tRNA(Leu) + L-leucine + ATP = L-leucyl-tRNA(Leu) + AMP + diphosphate. This chain is Leucine--tRNA ligase, found in Dechloromonas aromatica (strain RCB).